The sequence spans 224 residues: Zinc finger protein 22 (224 aa).

The disordered stretch occupies residues 1–34; it reads MRLAKPKAGISRSSSQGKAYENKRKTGRQRQKWG. Residues Lys18 and Lys23 each carry the N6-acetyllysine modification. Ser49 carries the post-translational modification Phosphoserine. 5 C2H2-type zinc fingers span residues 55–77, 83–105, 111–133, 139–161, and 167–189; these read YKCTECEKSFSQSSTLFQHQKIH, HKCADCGKSFFQSSNLIQHRRIH, YKCDECGESFKQSSNLIQHQRIH, YQCDECGRCFSQSSHLIQHQRTH, and YQCSECGKCFSQSSHLRQHMKVH.

The protein belongs to the krueppel C2H2-type zinc-finger protein family. In the embryo, expressed in developing craniofacial structures including dental epithelium of maxillary molar tooth organs, tongue epithelium and muscle, and craniofacial bone osteoblasts. In the adult, expressed in mesoderm-derived tissues such as skeletal muscle, heart, kidney and liver. Intermediate expression in spleen, thymus and brain. Low levels in endoderm-derived tissues such as intestine and colon.

The protein localises to the nucleus. In terms of biological role, binds DNA through the consensus sequence 5'-CAATG-3'. May be involved in transcriptional regulation and may play a role in tooth formation. This Homo sapiens (Human) protein is Zinc finger protein 22 (ZNF22).